We begin with the raw amino-acid sequence, 147 residues long: Large ribosomal subunit protein uL11 (147 aa).

It belongs to the universal ribosomal protein uL11 family. As to quaternary structure, part of the ribosomal stalk of the 50S ribosomal subunit. Interacts with L10 and the large rRNA to form the base of the stalk. L10 forms an elongated spine to which L12 dimers bind in a sequential fashion forming a multimeric L10(L12)X complex. Post-translationally, one or more lysine residues are methylated.

Forms part of the ribosomal stalk which helps the ribosome interact with GTP-bound translation factors. In Parabacteroides distasonis (strain ATCC 8503 / DSM 20701 / CIP 104284 / JCM 5825 / NCTC 11152), this protein is Large ribosomal subunit protein uL11.